The sequence spans 444 residues: Nuclear distribution protein PAC1 (444 aa).

A coiled-coil region spans residues 59 to 87; the sequence is TAIARLQRRIMSLEQNIRDLREASIEMNA. WD repeat units follow at residues 113-152, 156-199, 204-251, 254-293, 307-347, 367-406, and 408-444; these read TLESPVTGVRLHPELAVVFVSTEQGRLHCFDLMDITLPLA, AHTR…KLLR, HEHV…CLKS, PHSDWVRCLDVYGEFLITGCQDSTLRLTHWPSGNGLSVGL, SLQD…RLPQ, GHDSWIKAVGSRGDHVFTASDDKSVICWNWTNGQCLKKWN, and IHQGFVTCIDLDDSNHPLKRKIMVTGGIDCKCHIFMQ.

Belongs to the WD repeat LIS1/nudF family. In terms of assembly, self-associates. Interacts with NDL1 and dynein.

The protein resides in the cytoplasm. The protein localises to the cytoskeleton. Its subcellular location is the spindle pole. Its function is as follows. Positively regulates the activity of the minus-end directed microtubule motor protein dynein. Plays a central role in positioning the mitotic spindle at the bud neck during cell division. Targets cytoplasmic dynein to microtubule plus ends, thereby promoting dynein-mediated microtubule sliding along the bud cortex and consequently the movement of the mitotic spindle to the bud neck. The protein is Nuclear distribution protein PAC1 of Zygosaccharomyces rouxii (strain ATCC 2623 / CBS 732 / NBRC 1130 / NCYC 568 / NRRL Y-229).